A 387-amino-acid polypeptide reads, in one-letter code: Probable inactive shikimate kinase like 2, chloroplastic (387 aa).

The transit peptide at 1–71 (MAAFASGLAI…FNSFSCNCLS (71 aa)) directs the protein to the chloroplast. A disordered region spans residues 368 to 387 (NIKPPGWDPSSDTGPHPQFT).

The protein belongs to the shikimate kinase family.

The protein localises to the plastid. The protein resides in the chloroplast. This is Probable inactive shikimate kinase like 2, chloroplastic (SKL2) from Arabidopsis thaliana (Mouse-ear cress).